We begin with the raw amino-acid sequence, 143 residues long: Transcription antitermination protein NusB (143 aa).

The protein belongs to the NusB family.

Its function is as follows. Involved in transcription antitermination. Required for transcription of ribosomal RNA (rRNA) genes. Binds specifically to the boxA antiterminator sequence of the ribosomal RNA (rrn) operons. This Buchnera aphidicola subsp. Acyrthosiphon pisum (strain APS) (Acyrthosiphon pisum symbiotic bacterium) protein is Transcription antitermination protein NusB.